We begin with the raw amino-acid sequence, 461 residues long: MAAPWLQRWRGAYAGPSGPLRLVRLHGVQRSSWRAAHAAAGAFGAGPHPGPPQRAANPGPGPHPPPVATSREKHARIVQGRPDQPAEPKVLRISIIGAPNSGKSTLSNQLLGRKVFPVSKKVHTTRCKARGVITHEDTQLIILDTPGLTSPMKAKRHKLEAAMLTDPWDSMKHADLVLVLVDVSDHWTRNSLSLEVLKCLSQFPHIPSVLVLNKVDLLKKKIILLGLINELTEGIVNGKKLKVRSEFEYNSSSPAKTVLKVTQTPPPENRARESPCQLETDKAQEGSSLDNSSDVKASESSLDTEAREQKPYKYGDQKNRKGWPHFQDIFMLAALNGEEVDTLKQYLLMQAKPGPWEFHSRVLTSQSPHEICDNIIREKILEYLPLEVPYGVTQVTELWEEGPSGELIIVQNLVVPRKSHKLMLIGRRGALISRIAQEAGQDLMNIFLCDIRLKLKVEVKS.

The transit peptide at 1 to 35 (MAAPWLQRWRGAYAGPSGPLRLVRLHGVQRSSWRA) directs the protein to the mitochondrion. A disordered region spans residues 39 to 73 (AAGAFGAGPHPGPPQRAANPGPGPHPPPVATSREK). Residues 89–354 (KVLRISIIGA…QYLLMQAKPG (266 aa)) enclose the Era-type G domain. The G1 stretch occupies residues 97 to 104 (GAPNSGKS). 97–104 (GAPNSGKS) is a binding site for GTP. A G2 region spans residues 123–127 (HTTRC). Residues 144–147 (DTPG) are G3. Residues 144–148 (DTPGL) and 213–216 (NKVD) contribute to the GTP site. Positions 213–216 (NKVD) are G4. The interval 260–319 (KVTQTPPPENRARESPCQLETDKAQEGSSLDNSSDVKASESSLDTEAREQKPYKYGDQKN) is disordered. Over residues 269-284 (NRARESPCQLETDKAQ) the composition is skewed to basic and acidic residues. Over residues 285–303 (EGSSLDNSSDVKASESSLD) the composition is skewed to polar residues. Residues 304–319 (TEAREQKPYKYGDQKN) are compositionally biased toward basic and acidic residues. The interval 332 to 334 (LAA) is G5. Residues 380-461 (ILEYLPLEVP…RLKLKVEVKS (82 aa)) form the KH type-2 domain.

Belongs to the TRAFAC class TrmE-Era-EngA-EngB-Septin-like GTPase superfamily. Era GTPase family.

It localises to the mitochondrion matrix. The protein localises to the mitochondrion inner membrane. Functionally, probable GTPase that plays a role in the mitochondrial ribosomal small subunit assembly. Specifically binds the 12S mitochondrial rRNA (12S mt-rRNA) to a 33 nucleotide section delineating the 3' terminal stem-loop region. May act as a chaperone that protects the 12S mt-rRNA on the 28S mitoribosomal subunit during ribosomal small subunit assembly. The protein is GTPase Era, mitochondrial (ERAL1) of Gallus gallus (Chicken).